Reading from the N-terminus, the 547-residue chain is Chaperonin GroEL (547 aa).

ATP-binding positions include 30–33, lysine 51, 87–91, glycine 415, 479–481, and aspartate 495; these read TLGP, DGTTT, and NAA.

Belongs to the chaperonin (HSP60) family. As to quaternary structure, forms a cylinder of 14 subunits composed of two heptameric rings stacked back-to-back. Interacts with the co-chaperonin GroES.

The protein localises to the cytoplasm. It carries out the reaction ATP + H2O + a folded polypeptide = ADP + phosphate + an unfolded polypeptide.. In terms of biological role, together with its co-chaperonin GroES, plays an essential role in assisting protein folding. The GroEL-GroES system forms a nano-cage that allows encapsulation of the non-native substrate proteins and provides a physical environment optimized to promote and accelerate protein folding. In Pseudomonas syringae pv. tomato (strain ATCC BAA-871 / DC3000), this protein is Chaperonin GroEL.